The primary structure comprises 361 residues: MALTLEALAARFGGEIVGDGRCEVRALAPLDQAGPRQLAFLANPKYLAQVETTGAGAVLIAPGDLEKLGAAAHGRNFIVTPNPYAYFARVAQMFIDLAAPPRAAGVHPSATIDPAAQVAASAVIGPHVTVEAGAVIGERAQLDANVFVGRGTRIGDDSHLYPNVAIYHGCTLGPRAIVHSGAVIGSDGFGFAPDFVGEGDARTGAWVKIPQVGGVKVGPDVEIGANTTIDRGAMADTVIDECVKIDNLVQIGHNCRIGAYTVIAGCAGIAGSTTIGKHCMIGGAVGIAGHVTLGDYVIVTAKSGVSKSLPKAGIYTSAFPAVEHGDWNRSAALVRNLDKLRDRIKALETALAAREGDAGGA.

Histidine 253 serves as the catalytic Proton acceptor.

Belongs to the transferase hexapeptide repeat family. LpxD subfamily. Homotrimer.

It catalyses the reaction a UDP-3-O-[(3R)-3-hydroxyacyl]-alpha-D-glucosamine + a (3R)-hydroxyacyl-[ACP] = a UDP-2-N,3-O-bis[(3R)-3-hydroxyacyl]-alpha-D-glucosamine + holo-[ACP] + H(+). It functions in the pathway bacterial outer membrane biogenesis; LPS lipid A biosynthesis. Its function is as follows. Catalyzes the N-acylation of UDP-3-O-acylglucosamine using 3-hydroxyacyl-ACP as the acyl donor. Is involved in the biosynthesis of lipid A, a phosphorylated glycolipid that anchors the lipopolysaccharide to the outer membrane of the cell. This is UDP-3-O-acylglucosamine N-acyltransferase from Burkholderia pseudomallei (strain 1710b).